Reading from the N-terminus, the 252-residue chain is Ubiquinone biosynthesis O-methyltransferase (252 aa).

The S-adenosyl-L-methionine site is built by Arg-36, Gly-60, Asp-81, and Leu-123.

The protein belongs to the methyltransferase superfamily. UbiG/COQ3 family.

The enzyme catalyses a 3-demethylubiquinol + S-adenosyl-L-methionine = a ubiquinol + S-adenosyl-L-homocysteine + H(+). It catalyses the reaction a 3-(all-trans-polyprenyl)benzene-1,2-diol + S-adenosyl-L-methionine = a 2-methoxy-6-(all-trans-polyprenyl)phenol + S-adenosyl-L-homocysteine + H(+). It functions in the pathway cofactor biosynthesis; ubiquinone biosynthesis. O-methyltransferase that catalyzes the 2 O-methylation steps in the ubiquinone biosynthetic pathway. In Rickettsia prowazekii (strain Madrid E), this protein is Ubiquinone biosynthesis O-methyltransferase.